The primary structure comprises 213 residues: Kynurenine formamidase (213 aa).

Substrate is bound at residue tryptophan 18. The Zn(2+) site is built by histidine 48, histidine 52, and aspartate 54. Residue histidine 58 is the Proton donor/acceptor of the active site. Zn(2+)-binding residues include histidine 160 and glutamate 172.

The protein belongs to the Cyclase 1 superfamily. KynB family. As to quaternary structure, homodimer. Zn(2+) serves as cofactor.

It catalyses the reaction N-formyl-L-kynurenine + H2O = L-kynurenine + formate + H(+). It functions in the pathway amino-acid degradation; L-tryptophan degradation via kynurenine pathway; L-kynurenine from L-tryptophan: step 2/2. In terms of biological role, catalyzes the hydrolysis of N-formyl-L-kynurenine to L-kynurenine, the second step in the kynurenine pathway of tryptophan degradation. This Burkholderia lata (strain ATCC 17760 / DSM 23089 / LMG 22485 / NCIMB 9086 / R18194 / 383) protein is Kynurenine formamidase.